Consider the following 494-residue polypeptide: Aspartyl/glutamyl-tRNA(Asn/Gln) amidotransferase subunit B (494 aa).

It belongs to the GatB/GatE family. GatB subfamily. In terms of assembly, heterotrimer of A, B and C subunits.

The enzyme catalyses L-glutamyl-tRNA(Gln) + L-glutamine + ATP + H2O = L-glutaminyl-tRNA(Gln) + L-glutamate + ADP + phosphate + H(+). It carries out the reaction L-aspartyl-tRNA(Asn) + L-glutamine + ATP + H2O = L-asparaginyl-tRNA(Asn) + L-glutamate + ADP + phosphate + 2 H(+). In terms of biological role, allows the formation of correctly charged Asn-tRNA(Asn) or Gln-tRNA(Gln) through the transamidation of misacylated Asp-tRNA(Asn) or Glu-tRNA(Gln) in organisms which lack either or both of asparaginyl-tRNA or glutaminyl-tRNA synthetases. The reaction takes place in the presence of glutamine and ATP through an activated phospho-Asp-tRNA(Asn) or phospho-Glu-tRNA(Gln). The chain is Aspartyl/glutamyl-tRNA(Asn/Gln) amidotransferase subunit B from Rhodopseudomonas palustris (strain BisA53).